A 365-amino-acid polypeptide reads, in one-letter code: Casein kinase I homolog hhp1 (365 aa).

The Protein kinase domain maps to 11–279 (YRIGRKIGSG…YLRKLFRDLF (269 aa)). Residues 17–25 (IGSGSFGDI) and Lys-40 each bind ATP. Asp-130 functions as the Proton acceptor in the catalytic mechanism. Low complexity predominate over residues 301 to 311 (DQQHQQQLQQQ). A disordered region spans residues 301–365 (DQQHQQQLQQ…TGAQYINRPN (65 aa)). Positions 343 to 365 (INTTVPVINDPSATGAQYINRPN) are enriched in polar residues.

It belongs to the protein kinase superfamily. CK1 Ser/Thr protein kinase family. Casein kinase I subfamily.

The protein localises to the nucleus. The catalysed reaction is L-seryl-[protein] + ATP = O-phospho-L-seryl-[protein] + ADP + H(+). The enzyme catalyses L-threonyl-[protein] + ATP = O-phospho-L-threonyl-[protein] + ADP + H(+). Its function is as follows. Involved in DNA repair. Has a probable role in repairing alkylated DNA and may regulate the activity of protein(s) involved in double strand break repair caused by gamma rays. This is Casein kinase I homolog hhp1 (hhp1) from Schizosaccharomyces pombe (strain 972 / ATCC 24843) (Fission yeast).